A 612-amino-acid chain; its full sequence is Large ribosomal subunit assembly factor BipA (612 aa).

In terms of domain architecture, tr-type G spans 5-200 (NDLRNIAIIA…TIIKHVPAPV (196 aa)). Residues 17–22 (DHGKTT) and 130–133 (NKID) each bind GTP.

Belongs to the TRAFAC class translation factor GTPase superfamily. Classic translation factor GTPase family. BipA subfamily. Monomer.

It localises to the cytoplasm. It carries out the reaction GTP + H2O = GDP + phosphate + H(+). A 50S ribosomal subunit assembly protein with GTPase activity, required for 50S subunit assembly at low temperatures, may also play a role in translation. Binds GTP and analogs. Binds the 70S ribosome between the 30S and 50S subunits, in a similar position as ribosome-bound EF-G; it contacts a number of ribosomal proteins, both rRNAs and the A-site tRNA. In Bacillus subtilis (strain 168), this protein is Large ribosomal subunit assembly factor BipA.